Reading from the N-terminus, the 277-residue chain is Urease accessory protein UreD (277 aa).

Belongs to the UreD family. In terms of assembly, ureD, UreF and UreG form a complex that acts as a GTP-hydrolysis-dependent molecular chaperone, activating the urease apoprotein by helping to assemble the nickel containing metallocenter of UreC. The UreE protein probably delivers the nickel.

Its subcellular location is the cytoplasm. Functionally, required for maturation of urease via the functional incorporation of the urease nickel metallocenter. The polypeptide is Urease accessory protein UreD (Yersinia pestis bv. Antiqua (strain Antiqua)).